The chain runs to 331 residues: 6-phosphogluconolactonase (331 aa).

The residue at position 287 (lysine 287) is an N6-acetyllysine.

It belongs to the cycloisomerase 2 family.

It carries out the reaction 6-phospho-D-glucono-1,5-lactone + H2O = 6-phospho-D-gluconate + H(+). It participates in carbohydrate degradation; pentose phosphate pathway; D-ribulose 5-phosphate from D-glucose 6-phosphate (oxidative stage): step 2/3. Catalyzes the hydrolysis of 6-phosphogluconolactone to 6-phosphogluconate. This chain is 6-phosphogluconolactonase, found in Escherichia coli O127:H6 (strain E2348/69 / EPEC).